Reading from the N-terminus, the 404-residue chain is Caspase-1 (404 aa).

In terms of domain architecture, CARD spans 1-91 (MADKVLKDKR…HLAQTLGLSS (91 aa)). A propeptide spanning residues 1–119 (MADKVLKDKR…SLPAFVENMP (119 aa)) is cleaved from the precursor. Active-site residues include His-237 and Cys-285. The propeptide occupies 298–316 (SPKASTDSWTHQPLMLQSD). Ser-302 carries the phosphoserine modification.

The protein belongs to the peptidase C14A family. Heterotetramer that consists of two anti-parallel arranged heterodimers, each one formed by a 20 kDa (Caspase-1 subunit p20) and a 10 kDa (Caspase-1 subunit p10) subunit. May be a component of the inflammasome, a protein complex which also includes PYCARD, CARD8 and NLRP2 and whose function would be the activation of pro-inflammatory caspases. Component of the AIM2 PANoptosome complex, a multiprotein complex that drives inflammatory cell death (PANoptosis). Both the p10 and p20 subunits interact with MEFV. Interacts with CARD17P/INCA and CARD18. Interacts with SERPINB1; this interaction regulates CASP1 activity. In terms of assembly, heterotetramer that consists of two anti-parallel arranged heterodimers, each one formed by a 20 kDa (Caspase-1 subunit p20) and a 10 kDa (Caspase-1 subunit p10) subunit. Post-translationally, the two subunits are derived from the precursor sequence by an autocatalytic mechanism. Ubiquitinated via 'Lys-11'-linked polyubiquitination. Deubiquitinated by USP8.

Its subcellular location is the cytoplasm. It is found in the cell membrane. It carries out the reaction Strict requirement for an Asp residue at position P1 and has a preferred cleavage sequence of Tyr-Val-Ala-Asp-|-.. Thiol protease involved in a variety of inflammatory processes by proteolytically cleaving other proteins, such as the precursors of the inflammatory cytokines interleukin-1 beta (IL1B) and interleukin 18 (IL18) as well as the pyroptosis inducer Gasdermin-D (GSDMD), into active mature peptides. Plays a key role in cell immunity as an inflammatory response initiator: once activated through formation of an inflammasome complex, it initiates a pro-inflammatory response through the cleavage of the two inflammatory cytokines IL1B and IL18, releasing the mature cytokines which are involved in a variety of inflammatory processes. Cleaves a tetrapeptide after an Asp residue at position P1. Also initiates pyroptosis, a programmed lytic cell death pathway, through cleavage of GSDMD. In contrast to cleavage of interleukin IL1B, recognition and cleavage of GSDMD is not strictly dependent on the consensus cleavage site but depends on an exosite interface on CASP1 that recognizes and binds the Gasdermin-D, C-terminal (GSDMD-CT) part. Cleaves and activates CASP7 in response to bacterial infection, promoting plasma membrane repair. Upon inflammasome activation, during DNA virus infection but not RNA virus challenge, controls antiviral immunity through the cleavage of CGAS, rendering it inactive. In apoptotic cells, cleaves SPHK2 which is released from cells and remains enzymatically active extracellularly. In Canis lupus familiaris (Dog), this protein is Caspase-1 (CASP1).